The primary structure comprises 55 residues: Omega-ctenitoxin-Pr2a (55 aa).

5 disulfides stabilise this stretch: cysteine 2/cysteine 16, cysteine 9/cysteine 22, cysteine 15/cysteine 37, cysteine 24/cysteine 35, and cysteine 45/cysteine 52.

In terms of tissue distribution, expressed by the venom gland.

The protein resides in the secreted. Functionally, antagonist of L-type calcium channels (Cav1/CACNA1). In vivo, causes paralysis in posterior limbs, and gradual decrease in movement and aggression during 24 hours after intracerebroventricular injection in mice at dose levels of 3 ug per mouse. The polypeptide is Omega-ctenitoxin-Pr2a (Phoneutria reidyi (Brazilian Amazonian armed spider)).